The chain runs to 379 residues: Thiosulfate/3-mercaptopyruvate sulfurtransferase 1, mitochondrial (379 aa).

The transit peptide at 1–56 (MASTLFSRTFLAASHRLITPSLPQKIFNPATFLSRSLHSQLGSASTAYKSTTWARR) directs the protein to the mitochondrion. Alanine 57 is subject to N-acetylalanine. Rhodanese domains are found at residues 91-208 (REPD…DVES) and 259-373 (EDPT…LPIE). The Cysteine persulfide intermediate role is filled by cysteine 333.

In terms of tissue distribution, expressed in roots, rosette and cauline leaves, stems, flowers and siliques.

The protein localises to the mitochondrion. The enzyme catalyses thiosulfate + hydrogen cyanide = thiocyanate + sulfite + 2 H(+). The catalysed reaction is 2-oxo-3-sulfanylpropanoate + [thioredoxin]-dithiol = [thioredoxin]-disulfide + hydrogen sulfide + pyruvate + H(+). Functionally, catalyzes the transfer of a sulfur ion from a donor to cyanide or to other thiol compounds. Substrate preference is 3-mercaptopyruvate &gt; thiosulfate. Involved in embryo and seed development. In Arabidopsis thaliana (Mouse-ear cress), this protein is Thiosulfate/3-mercaptopyruvate sulfurtransferase 1, mitochondrial (STR1).